Reading from the N-terminus, the 351-residue chain is AT-hook motif nuclear-localized protein 10 (351 aa).

A disordered region spans residues 1–151 (MSGSETGLMA…RPPGSSSKRL (151 aa)). Low complexity predominate over residues 23 to 37 (HQQQQHSQAQPQQSQ). Positions 60–77 (SPPQQYQPNSAGENSVLN) are enriched in polar residues. Positions 97 to 105 (KKRRGRPRK) match the Bipartite nuclear localization signal motif. DNA-binding regions (a.T hook) lie at residues 97-109 (KKRR…YGPD) and 138-149 (KKRGRPPGSSSK). A PPC domain is found at 159-301 (TGIGFTPHVL…QMGLSSPVLP (143 aa)). 2 stretches are compositionally biased toward polar residues: residues 310–325 (MTPS…SESS) and 334–351 (IHQS…MPWK). Positions 310–351 (MTPSSPQSRGTMSESSCGGGHGSPIHQSTGGPYNNTINMPWK) are disordered.

Its subcellular location is the nucleus. Transcription factor that specifically binds AT-rich DNA sequences related to the nuclear matrix attachment regions (MARs). In Arabidopsis thaliana (Mouse-ear cress), this protein is AT-hook motif nuclear-localized protein 10.